A 158-amino-acid polypeptide reads, in one-letter code: Non-specific lipid transfer protein GPI-anchored 29 (158 aa).

The N-terminal stretch at 1–24 is a signal peptide; sequence MAYFSTATSLLLLVLSVSSPYVHG. Intrachain disulfides connect C28-C71, C38-C55, C56-C95, and C69-C105. N84 carries an N-linked (GlcNAc...) asparagine glycan. S134 is lipidated: GPI-anchor amidated serine. Positions 135-158 are cleaved as a propeptide — removed in mature form; that stretch reads KGNSLIPISGFSFVIVTALAMFRI.

This sequence belongs to the plant LTP family. Confined to the ovaries of the inflorescence.

The protein resides in the secreted. The protein localises to the cell membrane. In terms of biological role, probable lipid transfer protein. The polypeptide is Non-specific lipid transfer protein GPI-anchored 29 (Arabidopsis thaliana (Mouse-ear cress)).